The sequence spans 897 residues: Putative POM121-like protein 1-like (897 aa).

Residues 1-19 show a composition bias toward basic and acidic residues; sequence MPEQDKDPRVQENPDDQRT. Disordered stretches follow at residues 1–177, 211–252, 266–302, 315–348, 362–469, 484–522, 536–612, 642–741, 753–793, and 812–856; these read MPEQ…LPPP, IPDC…PKSQ, EVPS…RDTA, ASRD…GSLL, ATAA…ASRP, DCRP…RPKS, AEVP…LPPS, AQRS…ASRP, AISD…DRPK, and STAP…APFT. Over residues 54–65 the composition is skewed to polar residues; it reads LHAQSSEIRYNH. A compositionally biased stretch (low complexity) spans 66-76; it reads TSQTSWTSSST. Composition is skewed to polar residues over residues 77–89, 103–114, and 219–228; these read KRNA…SSTG, SRCQLTLSYSKT, and PSHTLSSLAT. 4 stretches are compositionally biased toward polar residues: residues 376–385, 417–430, 490–499, and 556–579; these read NQRSQTSRTR, SHCQ…NTVS, PSHTLSSLAT, and FSSS…TSLI. Residues 599-612 are compositionally biased toward low complexity; it reads TSAPAAAAAALPPS. Composition is skewed to polar residues over residues 650-676, 689-702, 762-771, and 828-849; these read NQRS…STEG, SHCQ…NTVS, PSHTLSSLAT, and FSSS…QDTS. A helical transmembrane segment spans residues 877–897; the sequence is LGLFLLVFSFFFLLTWASFSF.

It belongs to the POM121 family.

It is found in the membrane. This Homo sapiens (Human) protein is Putative POM121-like protein 1-like.